The sequence spans 390 residues: S-adenosylmethionine:tRNA ribosyltransferase-isomerase (390 aa).

The interval 1–22 (MTQPLSQDQHDSSSNMPTDNAE) is disordered.

Belongs to the QueA family. In terms of assembly, monomer.

The protein localises to the cytoplasm. The enzyme catalyses 7-aminomethyl-7-carbaguanosine(34) in tRNA + S-adenosyl-L-methionine = epoxyqueuosine(34) in tRNA + adenine + L-methionine + 2 H(+). It functions in the pathway tRNA modification; tRNA-queuosine biosynthesis. Functionally, transfers and isomerizes the ribose moiety from AdoMet to the 7-aminomethyl group of 7-deazaguanine (preQ1-tRNA) to give epoxyqueuosine (oQ-tRNA). The chain is S-adenosylmethionine:tRNA ribosyltransferase-isomerase from Psychrobacter sp. (strain PRwf-1).